Here is a 483-residue protein sequence, read N- to C-terminus: SWI/SNF-related matrix-associated actin-dependent regulator of chromatin subfamily D member 3 (483 aa).

Residue A2 is modified to N-acetylalanine. The tract at residues 27-102 is disordered; sequence RPGMPSGARM…ARSRSAKRRK (76 aa). The segment covering 78–88 has biased composition (low complexity); it reads QSQAQGQGQPV. Phosphoserine is present on S178. Residues 258 to 335 form the SWIB/MDM2 domain; the sequence is YQPPQFKLDP…PQRLTALLLP (78 aa).

Belongs to the SMARCD family. Component of the multiprotein chromatin-remodeling complexes SWI/SNF: SWI/SNF-A (BAF), SWI/SNF-B (PBAF) and related complexes. The canonical complex contains a catalytic subunit (either SMARCA4/BRG1/BAF190A or SMARCA2/BRM/BAF190B) and at least SMARCE1, ACTL6A/BAF53, SMARCC1/BAF155, SMARCC2/BAF170, and SMARCB1/SNF5/BAF47. Other subunits specific to each of the complexes may also be present permitting several possible combinations developmentally and tissue specific. Component of the BAF complex, which includes at least actin (ACTB), ARID1A/BAF250A, ARID1B/BAF250B, SMARCA2/BRM, SMARCA4/BRG1/BAF190A, ACTL6A/BAF53, ACTL6B/BAF53B, SMARCE1/BAF57, SMARCC1/BAF155, SMARCC2/BAF170, SMARCB1/SNF5/INI1, and one or more SMARCD1/BAF60A, SMARCD2/BAF60B, or SMARCD3/BAF60C. In muscle cells, the BAF complex also contains DPF3. Component of neural progenitors-specific chromatin remodeling complex (npBAF complex) composed of at least, ARID1A/BAF250A or ARID1B/BAF250B, SMARCD1/BAF60A, SMARCD3/BAF60C, SMARCA2/BRM/BAF190B, SMARCA4/BRG1/BAF190A, SMARCB1/BAF47, SMARCC1/BAF155, SMARCE1/BAF57, SMARCC2/BAF170, PHF10/BAF45A, ACTL6A/BAF53A and actin. Component of neuron-specific chromatin remodeling complex (nBAF complex) composed of at least, ARID1A/BAF250A or ARID1B/BAF250B, SMARCD1/BAF60A, SMARCD3/BAF60C, SMARCA2/BRM/BAF190B, SMARCA4/BRG1/BAF190A, SMARCB1/BAF47, SMARCC1/BAF155, SMARCE1/BAF57, SMARCC2/BAF170, DPF1/BAF45B, DPF3/BAF45C, ACTL6B/BAF53B and actin. May be a component of the SWI/SNF-B (PBAF) chromatin remodeling complex, at least composed of SMARCA4/BRG1, SMARCB1/BAF47/SNF5, ACTL6A/BAF53A or ACTL6B/BAF53B, SMARCE1/BAF57, SMARCD1/BAF60A, SMARCD2/BAF60B, perhaps SMARCD3/BAF60C, SMARCC1/BAF155, SMARCC2/BAF170, PBRM1/BAF180, ARID2/BAF200 and actin. Component of SWI/SNF (GBAF) subcomplex, which includes at least BICRA or BICRAL (mutually exclusive), BRD9, SS18, SMARCA2/BRM, SMARCA4/BRG1/BAF190A, ACTL6A/BAF53, SMARCC1/BAF155, and SMARCD1/BAF60A. Interacts with SMARCA4/BRG1/BAF190A. The precise distribution of the related SMARCD1, SMARCD2 and SMARCD3 proteins among these and other SWI/SNF nucleosome-remodeling complexes is not fully known. May allow recruitment of SWI/SNF containing complexes specifically to promoters where these factors are located. Also interacts with several nuclear receptors including PPARG/NR1C3, RXRA/NR1F1, ESR1, NR5A1, NR5A2/LRH1 and other transcriptional activators including the HLH protein SREBF1/SREBP1 and the homeobox protein PBX1. Interacts with PRDM1/BLIMP1. Ubiquitously expressed.

It is found in the nucleus. Its function is as follows. Involved in transcriptional activation and repression of select genes by chromatin remodeling (alteration of DNA-nucleosome topology). Component of SWI/SNF chromatin remodeling complexes that carry out key enzymatic activities, changing chromatin structure by altering DNA-histone contacts within a nucleosome in an ATP-dependent manner. Stimulates nuclear receptor mediated transcription. Belongs to the neural progenitors-specific chromatin remodeling complex (npBAF complex) and the neuron-specific chromatin remodeling complex (nBAF complex). During neural development a switch from a stem/progenitor to a postmitotic chromatin remodeling mechanism occurs as neurons exit the cell cycle and become committed to their adult state. The transition from proliferating neural stem/progenitor cells to postmitotic neurons requires a switch in subunit composition of the npBAF and nBAF complexes. As neural progenitors exit mitosis and differentiate into neurons, npBAF complexes which contain ACTL6A/BAF53A and PHF10/BAF45A, are exchanged for homologous alternative ACTL6B/BAF53B and DPF1/BAF45B or DPF3/BAF45C subunits in neuron-specific complexes (nBAF). The npBAF complex is essential for the self-renewal/proliferative capacity of the multipotent neural stem cells. The nBAF complex along with CREST plays a role regulating the activity of genes essential for dendrite growth. This is SWI/SNF-related matrix-associated actin-dependent regulator of chromatin subfamily D member 3 (Smarcd3) from Mus musculus (Mouse).